The primary structure comprises 97 residues: Probable lipopolysaccharide assembly protein A (97 aa).

2 helical membrane-spanning segments follow: residues 1–21 (MIKY…AITI) and 46–66 (VAIL…FFYI). Positions 67–95 (KLKLKNMALARQVKRQTLQINELTTTRDK) form a coiled coil.

The protein belongs to the LapA family.

The protein localises to the cell inner membrane. Involved in the assembly of lipopolysaccharide (LPS). In Haemophilus influenzae (strain ATCC 51907 / DSM 11121 / KW20 / Rd), this protein is Probable lipopolysaccharide assembly protein A.